Reading from the N-terminus, the 222-residue chain is GTP-binding nuclear protein Ran-4 (222 aa).

Residues 10–174 (DLPTFKLLIV…LYLARRIAGD (165 aa)) enclose the Small GTPase Ran-type domain. GTP is bound at residue 21–28 (DGGTGKTT). Residues 40–48 (HNTEPTLGV) are switch-I. Residues G71, 125–128 (NKVD), and 153–155 (SAK) each bind GTP. Residues 71–87 (GQEKYSGLKDAYYIHGQ) form a switch-II region.

The protein belongs to the small GTPase superfamily. Ran family. In terms of assembly, found in a nuclear export complex with RanGTP, exportin and pre-miRNA.

The protein resides in the nucleus. Its function is as follows. GTP-binding protein involved in nucleocytoplasmic transport. Required for the import of protein into the nucleus and also for RNA export. Involved in chromatin condensation and control of cell cycle. The polypeptide is GTP-binding nuclear protein Ran-4 (RAN4) (Arabidopsis thaliana (Mouse-ear cress)).